The following is an 854-amino-acid chain: DNA gyrase subunit A (854 aa).

The region spanning 42–510 (LPEVRDGLKP…ADGQVSDEDL (469 aa)) is the Topo IIA-type catalytic domain. The active-site O-(5'-phospho-DNA)-tyrosine intermediate is the tyrosine 129. Residues 537-543 (QKRGGKG) carry the GyrA-box motif.

It belongs to the type II topoisomerase GyrA/ParC subunit family. In terms of assembly, heterotetramer, composed of two GyrA and two GyrB chains. In the heterotetramer, GyrA contains the active site tyrosine that forms a transient covalent intermediate with DNA, while GyrB binds cofactors and catalyzes ATP hydrolysis.

It is found in the cytoplasm. The catalysed reaction is ATP-dependent breakage, passage and rejoining of double-stranded DNA.. With respect to regulation, DNA supercoiling is inhibited by the coumarin antibiotic novobiocin. Also inhibited by the fluoroquinolones ciprofloxacin and moxifloxacin. In terms of biological role, a type II topoisomerase that negatively supercoils closed circular double-stranded (ds) DNA in an ATP-dependent manner to modulate DNA topology and maintain chromosomes in an underwound state; also catalyzes the interconversion of other topological isomers of double-stranded DNA rings, including catenanes. At comparable concentrations has a stronger decatenation activity than E.coli, which is inhibited by ciprofloxacin and novobiocin. Cleaves dsDNA at the sequence 5'-AT/GGCC-3', leaving a 4 base overhang. Relaxes negatively supercoiled DNA in an ATP-independent manner. Its function is as follows. Negative supercoiling favors strand separation, and DNA replication, transcription, recombination and repair, all of which involve strand separation. Type II topoisomerases break and join 2 DNA strands simultaneously in an ATP-dependent manner. The polypeptide is DNA gyrase subunit A (Mycolicibacterium smegmatis (Mycobacterium smegmatis)).